A 237-amino-acid chain; its full sequence is Uridylate kinase (237 aa).

Residue 11-14 (KLSG) coordinates ATP. Glycine 53 is a binding site for UMP. Glycine 54 and arginine 58 together coordinate ATP. UMP contacts are provided by residues aspartate 73 and 134 to 141 (TGNPFFTT). ATP-binding residues include threonine 161, tyrosine 167, and aspartate 170.

This sequence belongs to the UMP kinase family. As to quaternary structure, homohexamer.

It is found in the cytoplasm. The catalysed reaction is UMP + ATP = UDP + ADP. Its pathway is pyrimidine metabolism; CTP biosynthesis via de novo pathway; UDP from UMP (UMPK route): step 1/1. Its activity is regulated as follows. Inhibited by UTP. Catalyzes the reversible phosphorylation of UMP to UDP. The chain is Uridylate kinase from Nitrosomonas europaea (strain ATCC 19718 / CIP 103999 / KCTC 2705 / NBRC 14298).